We begin with the raw amino-acid sequence, 207 residues long: NADH-quinone oxidoreductase subunit C (207 aa).

This sequence belongs to the complex I 30 kDa subunit family. NDH-1 is composed of 14 different subunits. Subunits NuoB, C, D, E, F, and G constitute the peripheral sector of the complex.

The protein localises to the cell inner membrane. The enzyme catalyses a quinone + NADH + 5 H(+)(in) = a quinol + NAD(+) + 4 H(+)(out). NDH-1 shuttles electrons from NADH, via FMN and iron-sulfur (Fe-S) centers, to quinones in the respiratory chain. The immediate electron acceptor for the enzyme in this species is believed to be ubiquinone. Couples the redox reaction to proton translocation (for every two electrons transferred, four hydrogen ions are translocated across the cytoplasmic membrane), and thus conserves the redox energy in a proton gradient. The sequence is that of NADH-quinone oxidoreductase subunit C from Thermus thermophilus (strain ATCC BAA-163 / DSM 7039 / HB27).